Consider the following 712-residue polypeptide: Polyribonucleotide nucleotidyltransferase (712 aa).

Positions 487 and 493 each coordinate Mg(2+). A KH domain is found at 554–613 (PRIEVMNIPVDKIREVIGSGGKVIREIVEKTGAKINIEDDGTVKIASSSGKEIEAARKWI). The S1 motif domain maps to 623–691 (GQIYEGTVVK…ERGKVRLSMK (69 aa)).

It belongs to the polyribonucleotide nucleotidyltransferase family. Mg(2+) is required as a cofactor.

The protein localises to the cytoplasm. The enzyme catalyses RNA(n+1) + phosphate = RNA(n) + a ribonucleoside 5'-diphosphate. Functionally, involved in mRNA degradation. Catalyzes the phosphorolysis of single-stranded polyribonucleotides processively in the 3'- to 5'-direction. The protein is Polyribonucleotide nucleotidyltransferase of Rhizobium etli (strain CIAT 652).